Consider the following 126-residue polypeptide: Protein ApaG (126 aa).

The 125-residue stretch at 2 to 126 folds into the ApaG domain; that stretch reads SFPIDSIKIK…FRLAMPGVMQ (125 aa).

This Shewanella denitrificans (strain OS217 / ATCC BAA-1090 / DSM 15013) protein is Protein ApaG.